The sequence spans 325 residues: MANLIDNTARSAASDARAARHPEKQKRADTPVLRKPDWIRVKAPLGKTFSETQKIVKDGGLVTVCEEAGCPNIGECWEQKHATFMILGDTCTRACSFCNVKTGLPAAVDTDEPRRVAEAVAQMGLNHVVITSVDRDDLDDGGAQHFVDVIEAIRAATPSTTIEILTPDFLRKPGAAEAVIDARPDVFNHNLETVPRLYLSIRPGARYFHSLRLLERVKDRDPAQFTKSGIMVGLGESKEEVMQVMDDMRSAGIDFLTIGQYLQPTRKHAAVDRFVHPDEFKAYETIARAKGFLMVSATPLTRSSHHAGDDFAKLRAAREQMMARG.

A disordered region spans residues 1 to 31 (MANLIDNTARSAASDARAARHPEKQKRADTP). Residues 17-31 (RAARHPEKQKRADTP) are compositionally biased toward basic and acidic residues. The [4Fe-4S] cluster site is built by Cys-65, Cys-70, Cys-76, Cys-91, Cys-95, Cys-98, and Ser-304. A Radical SAM core domain is found at 77-293 (WEQKHATFMI…ETIARAKGFL (217 aa)).

It belongs to the radical SAM superfamily. Lipoyl synthase family. [4Fe-4S] cluster is required as a cofactor.

It localises to the cytoplasm. It catalyses the reaction [[Fe-S] cluster scaffold protein carrying a second [4Fe-4S](2+) cluster] + N(6)-octanoyl-L-lysyl-[protein] + 2 oxidized [2Fe-2S]-[ferredoxin] + 2 S-adenosyl-L-methionine + 4 H(+) = [[Fe-S] cluster scaffold protein] + N(6)-[(R)-dihydrolipoyl]-L-lysyl-[protein] + 4 Fe(3+) + 2 hydrogen sulfide + 2 5'-deoxyadenosine + 2 L-methionine + 2 reduced [2Fe-2S]-[ferredoxin]. It functions in the pathway protein modification; protein lipoylation via endogenous pathway; protein N(6)-(lipoyl)lysine from octanoyl-[acyl-carrier-protein]: step 2/2. Functionally, catalyzes the radical-mediated insertion of two sulfur atoms into the C-6 and C-8 positions of the octanoyl moiety bound to the lipoyl domains of lipoate-dependent enzymes, thereby converting the octanoylated domains into lipoylated derivatives. This Maricaulis maris (strain MCS10) (Caulobacter maris) protein is Lipoyl synthase.